A 241-amino-acid chain; its full sequence is tRNA (guanine-N(7)-)-methyltransferase (241 aa).

Residues 1–20 are disordered; it reads MTESNDTPIQPEAGDERQHR. Residues glutamate 71, glutamate 96, aspartate 123, and aspartate 146 each coordinate S-adenosyl-L-methionine. Aspartate 146 is a catalytic residue. Substrate is bound by residues lysine 150, aspartate 182, and 219-222; that span reads TKFE.

The protein belongs to the class I-like SAM-binding methyltransferase superfamily. TrmB family.

It catalyses the reaction guanosine(46) in tRNA + S-adenosyl-L-methionine = N(7)-methylguanosine(46) in tRNA + S-adenosyl-L-homocysteine. Its pathway is tRNA modification; N(7)-methylguanine-tRNA biosynthesis. Functionally, catalyzes the formation of N(7)-methylguanine at position 46 (m7G46) in tRNA. The protein is tRNA (guanine-N(7)-)-methyltransferase of Pseudomonas fluorescens (strain ATCC BAA-477 / NRRL B-23932 / Pf-5).